We begin with the raw amino-acid sequence, 1132 residues long: Serine/threonine-protein kinase spk-1 (1132 aa).

The chain crosses the membrane as a helical span at residues 75-95 (GGSLILTDIFPTVLFMFVVLF). Disordered stretches follow at residues 240 to 388 (NEDQ…DSDD) and 419 to 481 (NKKA…KRGG). Composition is skewed to acidic residues over residues 281–290 (SEDEDVESQE) and 311–336 (DEPI…LGDE). Over residues 362 to 372 (DSSVSSSTSST) the composition is skewed to low complexity. Acidic residues predominate over residues 373 to 388 (PDDDEDDSATSYDSDD). Residues 421–433 (KAEVNANEERMDD) show a composition bias toward basic and acidic residues. Low complexity predominate over residues 434–443 (VSVSPGRSDS). The 550-residue stretch at 495-1044 (YHVIRKLGWG…ANDALKHPFL (550 aa)) folds into the Protein kinase domain. Residues 501–509 (LGWGHFSTV) and K524 contribute to the ATP site. D628 functions as the Proton acceptor in the catalytic mechanism. The disordered stretch occupies residues 1066–1121 (QVPEALDGNQEVYRDENDSNSASERSANRSAGSDDEEEFHMDRPGPSGVINEPADV). Positions 1084-1096 (SNSASERSANRSA) are enriched in low complexity.

It belongs to the protein kinase superfamily. Ser/Thr protein kinase family.

It localises to the membrane. The catalysed reaction is L-seryl-[protein] + ATP = O-phospho-L-seryl-[protein] + ADP + H(+). It carries out the reaction L-threonyl-[protein] + ATP = O-phospho-L-threonyl-[protein] + ADP + H(+). Its function is as follows. Required for embryogenesis and germline development in both adult hermaphrodites and males. SR-protein kinase (SRPK) that binds directly to and phosphorylates RS domains. The protein is Serine/threonine-protein kinase spk-1 (spk-1) of Caenorhabditis briggsae.